The primary structure comprises 132 residues: Small ribosomal subunit protein uS8 (132 aa).

The protein belongs to the universal ribosomal protein uS8 family. Part of the 30S ribosomal subunit. Contacts proteins S5 and S12.

Functionally, one of the primary rRNA binding proteins, it binds directly to 16S rRNA central domain where it helps coordinate assembly of the platform of the 30S subunit. This is Small ribosomal subunit protein uS8 from Bacillus cytotoxicus (strain DSM 22905 / CIP 110041 / 391-98 / NVH 391-98).